A 693-amino-acid chain; its full sequence is Glycine--tRNA ligase beta subunit (693 aa).

The segment covering 65-74 (QPDKSVEKRG) has biased composition (basic and acidic residues). The disordered stretch occupies residues 65 to 84 (QPDKSVEKRGPAVKAAFDDS).

This sequence belongs to the class-II aminoacyl-tRNA synthetase family. In terms of assembly, tetramer of two alpha and two beta subunits.

The protein resides in the cytoplasm. The enzyme catalyses tRNA(Gly) + glycine + ATP = glycyl-tRNA(Gly) + AMP + diphosphate. This is Glycine--tRNA ligase beta subunit from Marinobacter nauticus (strain ATCC 700491 / DSM 11845 / VT8) (Marinobacter aquaeolei).